The sequence spans 128 residues: MIDVNLINGIALAFEGDAVYSMYIRRHLILKGMTKPNKLHQEATKYVSAKAQARLIALMLEEQVLTEKEEEIYKRGRNTNSHTKAKNADVVTYRMSTGFEAVMGYLHMTENLERLESLVSWCIQKVEG.

Residue Asp-17 is part of the active site.

The protein belongs to the MrnC RNase family. As to quaternary structure, homodimer. Mg(2+) is required as a cofactor.

It is found in the cytoplasm. Involved in correct processing of both the 5' and 3' ends of 23S rRNA precursor. Processes 30S rRNA precursor transcript even in absence of ribonuclease 3 (Rnc); Rnc processes 30S rRNA into smaller rRNA precursors. This chain is Mini-ribonuclease 3, found in Streptococcus pneumoniae (strain ATCC BAA-255 / R6).